The primary structure comprises 229 residues: Flagellar brake protein YcgR (229 aa).

One can recognise a PilZ domain in the interval 134–218 (QLSLRVLDVS…GERALQRYID (85 aa)).

Belongs to the YcgR family. As to quaternary structure, monomer. Interacts with the flagellar basal bodies.

Its subcellular location is the bacterial flagellum basal body. Its function is as follows. Acts as a flagellar brake, regulating swimming and swarming in a bis-(3'-5') cyclic diguanylic acid (c-di-GMP)-dependent manner. Binds 1 c-di-GMP dimer per subunit. Increasing levels of c-di-GMP lead to decreased motility. In Methylibium petroleiphilum (strain ATCC BAA-1232 / LMG 22953 / PM1), this protein is Flagellar brake protein YcgR.